The following is a 366-amino-acid chain: Protein FAM110B (366 aa).

Disordered regions lie at residues 127–150 (SSEG…HRDT), 163–182 (KVYP…HVSR), and 214–253 (IPCS…PSLQ). Ser-234 and Ser-297 each carry phosphoserine. Positions 313-333 (DCEQSQDSNSDLRNDDSANDR) are disordered. Over residues 322–331 (SDLRNDDSAN) the composition is skewed to basic and acidic residues.

Belongs to the FAM110 family.

It is found in the cytoplasm. Its subcellular location is the cytoskeleton. It localises to the microtubule organizing center. The protein localises to the centrosome. The sequence is that of Protein FAM110B (Fam110b) from Rattus norvegicus (Rat).